The primary structure comprises 538 residues: MLDSLVSKLPSLSTSDHASVVALNLFVALLCACIVLGHLLEENRWMNESITALLIGLGTGVTILLISKGKSSHLLVFSEDLFFIYLLPPIIFNAGFQVKKKQFFRNFVTIMLFGAVGTIISCTIISLGVTQFFKKLDIGTFDLGDYLAIGAIFAATDSVCTLQVLNQDETPLLYSLVFGEGVVNDATSVVVFNAIQSFDLTHLNHEAAFHLLGNFLYLFLLSTLLGAATGLISAYVIKKLYFGRHSTDREVALMMLMAYLSYMLAELFDLSGILTVFFCGIVMSHYTWHNVTESSRITTKHTFATLSFLAETFIFLYVGMDALDIDKWRSVSDTPGTSIAVSSILMGLVMVGRAAFVFPLSFLSNLAKKNQSEKINFNMQVVIWWSGLMRGAVSMALAYNKFTRAGHTDVRGNAIMITSTITVCLFSTVVFGMLTKPLISYLLPHQNATTSMLSDDNTPKSIHIPLLDQDSFIEPSGNHNVPRPDSIRGFLTRPTRTVHYYWRQFDDSFMRPVFGGRGFVPFVPGSPTERNPPDLSKA.

The Cytoplasmic segment spans residues M1 to S19. A helical transmembrane segment spans residues V20–L40. Topologically, residues E41–W45 are vacuolar. A helical transmembrane segment spans residues M46–I66. Topologically, residues S67–H73 are cytoplasmic. The segment at residues L74–A94 is an intramembrane region (helical). Residues G95–N106 are Cytoplasmic-facing. The helical transmembrane segment at F107–L127 threads the bilayer. The Vacuolar portion of the chain corresponds to G128 to Y146. 2 intramembrane regions (helical) span residues L147–N166 and L172–F192. At N193–L216 the chain is on the vacuolar side. Residues Y217–I237 form a helical membrane-spanning segment. The Cytoplasmic segment spans residues K238–Y262. Residues M263–M283 form a helical membrane-spanning segment. At S284 to T302 the chain is on the vacuolar side. The N-linked (GlcNAc...) asparagine glycan is linked to N290. A helical transmembrane segment spans residues F303–L323. Over D324–S342 the chain is Cytoplasmic. A helical transmembrane segment spans residues S343–L363. Topologically, residues S364 to N378 are vacuolar. N-linked (GlcNAc...) asparagine glycosylation occurs at N370. A helical transmembrane segment spans residues M379–Y399. The Cytoplasmic portion of the chain corresponds to N400–N413. The helical transmembrane segment at A414–L434 threads the bilayer. At T435–A538 the chain is on the vacuolar side. N447 is a glycosylation site (N-linked (GlcNAc...) asparagine). An interaction with CML18/CAM15 region spans residues R496–G518.

The protein belongs to the monovalent cation:proton antiporter 1 (CPA1) transporter (TC 2.A.36) family. Calcium and pH-dependent interaction with CML18/CAM15 (increases when pH decreases, better at pH 5.5 than at pH 7.5). As to expression, ubiquitous, with higher levels around vascular tissues and guard cells.

It localises to the vacuole membrane. The protein resides in the endoplasmic reticulum membrane. The protein localises to the golgi apparatus membrane. The enzyme catalyses Na(+)(in) + H(+)(out) = Na(+)(out) + H(+)(in). The catalysed reaction is K(+)(in) + H(+)(out) = K(+)(out) + H(+)(in). Functionally, acts in low affinity electroneutral exchange of protons for cations such as Na(+) or K(+) across membranes. Can also exchange Li(+) and Cs(+) with a lower affinity. Involved in vacuolar ion compartmentalization necessary for cell volume regulation and cytoplasmic Na(+) detoxification. Required during leaves expansion, probably to stimulate epidermal cell expansion. Confers competence to grow in high salinity conditions. The protein is Sodium/hydrogen exchanger 1 (NHX1) of Arabidopsis thaliana (Mouse-ear cress).